The primary structure comprises 462 residues: tRNA(Ile2) 2-agmatinylcytidine synthetase TiaS (462 aa).

It belongs to the TiaS family.

It is found in the cytoplasm. It carries out the reaction cytidine(34) in tRNA(Ile2) + agmatine + ATP + H2O = 2-agmatinylcytidine(34) in tRNA(Ile2) + AMP + 2 phosphate + 2 H(+). ATP-dependent agmatine transferase that catalyzes the formation of 2-agmatinylcytidine (agm2C) at the wobble position (C34) of tRNA(Ile2), converting the codon specificity from AUG to AUA. This is tRNA(Ile2) 2-agmatinylcytidine synthetase TiaS from Haloquadratum walsbyi (strain DSM 16790 / HBSQ001).